A 242-amino-acid chain; its full sequence is uncharacterized protein (242 aa).

The 114-residue stretch at 3–116 (TALVIDDEQF…RLNKTVKRLN (114 aa)) folds into the Response regulatory domain. Aspartate 54 carries the post-translational modification 4-aspartylphosphate. The HTH LytTR-type domain occupies 139–240 (IPCIGHNRIV…LKVLKEMLGI (102 aa)).

This is an uncharacterized protein from Vibrio parahaemolyticus serotype O3:K6 (strain RIMD 2210633).